Consider the following 186-residue polypeptide: uncharacterized protein (186 aa).

This is an uncharacterized protein from Acanthamoeba polyphaga mimivirus (APMV).